A 401-amino-acid chain; its full sequence is Elongation factor Tu 1 (401 aa).

Positions 10-209 (KPHVNVGTIG…AVDEYIPTPV (200 aa)) constitute a tr-type G domain. The interval 19 to 26 (GHVDHGKT) is G1. 19–26 (GHVDHGKT) serves as a coordination point for GTP. Thr26 is a binding site for Mg(2+). The segment at 60 to 64 (GITIA) is G2. Positions 81-84 (DCPG) are G3. GTP-binding positions include 81 to 85 (DCPGH) and 136 to 139 (NKVD). Residues 136-139 (NKVD) are G4. A G5 region spans residues 174–176 (SAL).

Belongs to the TRAFAC class translation factor GTPase superfamily. Classic translation factor GTPase family. EF-Tu/EF-1A subfamily. As to quaternary structure, monomer.

Its subcellular location is the cytoplasm. The catalysed reaction is GTP + H2O = GDP + phosphate + H(+). Its function is as follows. GTP hydrolase that promotes the GTP-dependent binding of aminoacyl-tRNA to the A-site of ribosomes during protein biosynthesis. The chain is Elongation factor Tu 1 from Roseiflexus sp. (strain RS-1).